We begin with the raw amino-acid sequence, 238 residues long: tRNA (guanine-N(7)-)-methyltransferase (238 aa).

Positions 68, 93, 120, and 143 each coordinate S-adenosyl-L-methionine. D143 is a catalytic residue. Residues K147, D179, and T216–E219 contribute to the substrate site.

Belongs to the class I-like SAM-binding methyltransferase superfamily. TrmB family.

It catalyses the reaction guanosine(46) in tRNA + S-adenosyl-L-methionine = N(7)-methylguanosine(46) in tRNA + S-adenosyl-L-homocysteine. Its pathway is tRNA modification; N(7)-methylguanine-tRNA biosynthesis. Functionally, catalyzes the formation of N(7)-methylguanine at position 46 (m7G46) in tRNA. This Shewanella denitrificans (strain OS217 / ATCC BAA-1090 / DSM 15013) protein is tRNA (guanine-N(7)-)-methyltransferase.